The sequence spans 122 residues: Nitrogen fixation nifHD region GlnB-like protein 2 (122 aa).

It belongs to the P(II) protein family.

Functionally, could be involved in the regulation of nitrogen fixation. The protein is Nitrogen fixation nifHD region GlnB-like protein 2 (glnBB) of Methanobacterium ivanovii.